We begin with the raw amino-acid sequence, 123 residues long: Ig heavy chain V region H8 (123 aa).

Residues 1–114 (EVKLVESGGG…BSYWYFDVWG (114 aa)) enclose the Ig-like domain.

This Mus musculus (Mouse) protein is Ig heavy chain V region H8.